Consider the following 212-residue polypeptide: MARIVIVDYGMGNLASVRNALRAVGFEAAVSDDPAAVAGADGLVLPGVGAFGTGMQNLARRGLDQAVRQAAAAGRPVLGICLGMQLLLAEGDEGGPRPGLGLLEGRVARLPDGLPLPQIGWNLVEPQRDHPLFAGLPTPFWAYFDHAYAVEGEPPSTALALTDYGRTYPSVVGRGNLLGIQFHPEKSSRAGLRMLANWGRMVCDLISTRPST.

In terms of domain architecture, Glutamine amidotransferase type-1 spans 3–208; that stretch reads RIVIVDYGMG…GRMVCDLIST (206 aa). Cys81 functions as the Nucleophile in the catalytic mechanism. Residues His183 and Glu185 contribute to the active site.

Heterodimer of HisH and HisF.

The protein resides in the cytoplasm. The catalysed reaction is 5-[(5-phospho-1-deoxy-D-ribulos-1-ylimino)methylamino]-1-(5-phospho-beta-D-ribosyl)imidazole-4-carboxamide + L-glutamine = D-erythro-1-(imidazol-4-yl)glycerol 3-phosphate + 5-amino-1-(5-phospho-beta-D-ribosyl)imidazole-4-carboxamide + L-glutamate + H(+). The enzyme catalyses L-glutamine + H2O = L-glutamate + NH4(+). It functions in the pathway amino-acid biosynthesis; L-histidine biosynthesis; L-histidine from 5-phospho-alpha-D-ribose 1-diphosphate: step 5/9. Its function is as follows. IGPS catalyzes the conversion of PRFAR and glutamine to IGP, AICAR and glutamate. The HisH subunit catalyzes the hydrolysis of glutamine to glutamate and ammonia as part of the synthesis of IGP and AICAR. The resulting ammonia molecule is channeled to the active site of HisF. This Symbiobacterium thermophilum (strain DSM 24528 / JCM 14929 / IAM 14863 / T) protein is Imidazole glycerol phosphate synthase subunit HisH.